Reading from the N-terminus, the 411-residue chain is Proline-responsive transcriptional activator PutR (411 aa).

Belongs to the CdaR family.

Activates transcription of the putBCP operon. Requires proline as a coactivator. The polypeptide is Proline-responsive transcriptional activator PutR (Bacillus subtilis (strain 168)).